Here is a 185-residue protein sequence, read N- to C-terminus: Homeobox-leucine zipper protein ATHB-22 (185 aa).

A DNA-binding region (homeobox) is located at residues 76–135 (TSEQLKFLERSFQEEIKLNPDRKMKLNPDRKMKLSKELGLQPRQIAVWFQNRKARWKNKQ). The segment at 136-164 (LEHLYESLRQEFDIVSREKELLQEELIQL) is leucine-zipper.

Belongs to the HD-ZIP homeobox family. Class I subfamily. As to expression, expressed in siliques.

The protein resides in the nucleus. Probable transcription factor. The polypeptide is Homeobox-leucine zipper protein ATHB-22 (ATHB-22) (Arabidopsis thaliana (Mouse-ear cress)).